Here is a 958-residue protein sequence, read N- to C-terminus: Dermatan-sulfate epimerase (958 aa).

A signal peptide spans 1–22 (MRTHTRGAPSVFFICLFCFVSA). The Lumenal portion of the chain corresponds to 23–902 (CVTDENPEVM…APALSASYTR (880 aa)). N-linked (GlcNAc...) asparagine glycosylation is present at Asn183. Catalysis depends on His205, which acts as the Proton donor. Tyr261 is a catalytic residue. Asn336 and Asn411 each carry an N-linked (GlcNAc...) asparagine glycan. Positions 452 and 470 each coordinate Mn(2+). Residue Tyr473 is part of the active site. Asn481 provides a ligand contact to Mn(2+). Residues Asn642 and Asn648 are each glycosylated (N-linked (GlcNAc...) asparagine). Residues 903–923 (LFLILNIAIFFVMLAMQLTYF) traverse the membrane as a helical segment. Topologically, residues 924–933 (QRAQSLHGQR) are cytoplasmic. The helical transmembrane segment at 934–954 (CLYAVLLIDSCILLWLYSSCS) threads the bilayer. The Lumenal portion of the chain corresponds to 955-958 (QSQC).

The protein belongs to the dermatan-sulfate isomerase family. Mn(2+) is required as a cofactor. Post-translationally, N-glycosylated. Glycosylation is important for enzymatic activity.

It localises to the endoplasmic reticulum membrane. The protein localises to the golgi apparatus membrane. It is found in the cytoplasmic vesicle membrane. The protein resides in the microsome membrane. It carries out the reaction chondroitin 4'-sulfate = dermatan 4'-sulfate. It participates in glycan metabolism; chondroitin sulfate biosynthesis. Its pathway is glycan metabolism; heparan sulfate biosynthesis. Its function is as follows. Converts D-glucuronic acid to L-iduronic acid (IdoUA) residues. Plays an important role in the biosynthesis of the glycosaminoglycan/mucopolysaccharide dermatan sulfate. In Bos taurus (Bovine), this protein is Dermatan-sulfate epimerase (DSE).